Here is a 554-residue protein sequence, read N- to C-terminus: Myo-inositol transporter 1 (554 aa).

Positions 1–13 (MGSSTNNTQSKAT) are enriched in polar residues. The tract at residues 1-57 (MGSSTNNTQSKATPSVLENEVNSSKSSVVSSTSSAKGLLRETTNHGTMETSSVQISE) is disordered. Asn-6 and Asn-22 each carry an N-linked (GlcNAc...) asparagine glycan. Residues 15–34 (SVLENEVNSSKSSVVSSTSS) show a composition bias toward low complexity. Over residues 44 to 57 (NHGTMETSSVQISE) the composition is skewed to polar residues. A run of 6 helical transmembrane segments spans residues 65–85 (MVLV…YDTG), 110–130 (FITS…GVLA), 144–164 (IIFV…TMIA), 167–187 (FVLG…ISEL), 196–216 (LIVT…FINW), and 227–247 (VSVG…WFLP). N-linked (GlcNAc...) asparagine glycosylation occurs at Asn-279. A helical transmembrane segment spans residues 313-332 (GNFRALILACGLQGIQQFTG). Asn-351 is a glycosylation site (N-linked (GlcNAc...) asparagine). The next 5 helical transmembrane spans lie at 354 to 374 (AVSI…ICII), 382 to 402 (ILLV…VAFH), 420 to 440 (GWGI…AIGI), 459 to 479 (IGAM…ASTF), and 490 to 510 (GTFS…YFLL).

It belongs to the major facilitator superfamily. Sugar transporter (TC 2.A.1.1) family.

The protein resides in the cell membrane. It carries out the reaction myo-inositol(out) + H(+)(out) = myo-inositol(in) + H(+)(in). Functionally, major transporter for myo-inositol. In Candida albicans (strain SC5314 / ATCC MYA-2876) (Yeast), this protein is Myo-inositol transporter 1.